A 71-amino-acid polypeptide reads, in one-letter code: Large ribosomal subunit protein bL31 (71 aa).

Zn(2+)-binding residues include C16, C18, C38, and C41.

This sequence belongs to the bacterial ribosomal protein bL31 family. Type A subfamily. As to quaternary structure, part of the 50S ribosomal subunit. Requires Zn(2+) as cofactor.

In terms of biological role, binds the 23S rRNA. In Chromobacterium violaceum (strain ATCC 12472 / DSM 30191 / JCM 1249 / CCUG 213 / NBRC 12614 / NCIMB 9131 / NCTC 9757 / MK), this protein is Large ribosomal subunit protein bL31.